Reading from the N-terminus, the 88-residue chain is MGTARFLRAVLLLSVLLMVTFPALLSAEHHDGRVDICRLPSDSGDCLRFFEVWYFDGTTCTKFVYGGYGGNDNRFPTEKACMKRCAKA.

Positions 1 to 27 (MGTARFLRAVLLLSVLLMVTFPALLSA) are cleaved as a signal peptide. Positions 28–33 (EHHDGR) are excised as a propeptide. Residues 37–85 (CRLPSDSGDCLRFFEVWYFDGTTCTKFVYGGYGGNDNRFPTEKACMKRC) form the BPTI/Kunitz inhibitor domain. Intrachain disulfides connect Cys37-Cys85 and Cys60-Cys81.

This sequence belongs to the venom Kunitz-type family. 03 (sub-Kunitz) subfamily. In terms of tissue distribution, expressed by the venom gland.

Its subcellular location is the secreted. Functionally, serine protease inhibitor that inhibits trypsin at a molar ratio of 1:1. This is Kunitz-type U15-theraphotoxin-Hhn1c from Cyriopagopus hainanus (Chinese bird spider).